The primary structure comprises 367 residues: Flagellar P-ring protein (367 aa).

Residues M1–A21 form the signal peptide.

It belongs to the FlgI family. As to quaternary structure, the basal body constitutes a major portion of the flagellar organelle and consists of four rings (L,P,S, and M) mounted on a central rod.

It localises to the periplasm. The protein resides in the bacterial flagellum basal body. In terms of biological role, assembles around the rod to form the L-ring and probably protects the motor/basal body from shearing forces during rotation. The sequence is that of Flagellar P-ring protein from Nitrosococcus oceani (strain ATCC 19707 / BCRC 17464 / JCM 30415 / NCIMB 11848 / C-107).